The chain runs to 172 residues: 3-hydroxydecanoyl-[acyl-carrier-protein] dehydratase (172 aa).

H71 is a catalytic residue.

It belongs to the thioester dehydratase family. FabA subfamily. Homodimer.

It is found in the cytoplasm. It carries out the reaction a (3R)-hydroxyacyl-[ACP] = a (2E)-enoyl-[ACP] + H2O. It catalyses the reaction (3R)-hydroxydecanoyl-[ACP] = (2E)-decenoyl-[ACP] + H2O. The enzyme catalyses (2E)-decenoyl-[ACP] = (3Z)-decenoyl-[ACP]. Its pathway is lipid metabolism; fatty acid biosynthesis. In terms of biological role, necessary for the introduction of cis unsaturation into fatty acids. Catalyzes the dehydration of (3R)-3-hydroxydecanoyl-ACP to E-(2)-decenoyl-ACP and then its isomerization to Z-(3)-decenoyl-ACP. Can catalyze the dehydratase reaction for beta-hydroxyacyl-ACPs with saturated chain lengths up to 16:0, being most active on intermediate chain length. The sequence is that of 3-hydroxydecanoyl-[acyl-carrier-protein] dehydratase from Sodalis glossinidius (strain morsitans).